The sequence spans 1246 residues: DNA-directed RNA polymerase subunit beta (1246 aa).

The segment at 1171-1246 (IDDDAGEMSL…EFDGYNDFKA (76 aa)) is disordered. Composition is skewed to acidic residues over residues 1202–1223 (DEEEKDEDNDSEEALITEEDFE) and 1230–1240 (EYAEDDDEFDG).

The protein belongs to the RNA polymerase beta chain family. In terms of assembly, the RNAP catalytic core consists of 2 alpha, 1 beta, 1 beta' and 1 omega subunit. When a sigma factor is associated with the core the holoenzyme is formed, which can initiate transcription.

It catalyses the reaction RNA(n) + a ribonucleoside 5'-triphosphate = RNA(n+1) + diphosphate. DNA-dependent RNA polymerase catalyzes the transcription of DNA into RNA using the four ribonucleoside triphosphates as substrates. The protein is DNA-directed RNA polymerase subunit beta of Alkaliphilus metalliredigens (strain QYMF).